Reading from the N-terminus, the 208-residue chain is MADLSAQDKLKQICDALREETLKPAEEEAGSIVHNAREQAKRIVEEAKEEAQRIIRSAEETADQTLKKGEAALVQAGKRSLENLKQAVETKIFRESLGEWLDHVATDPEVSAKLVQALVQAVDAQGISGNLSAYIGKHVSARAVNEALGKEITSKLKEKGVSVGKFSGGAQLKVEERNWVLDMSSEVLLDLLTRFLQKDFREMIFQSC.

It belongs to the V-ATPase E subunit family.

Functionally, produces ATP from ADP in the presence of a proton gradient across the membrane. The sequence is that of V-type proton ATPase subunit E from Chlamydia trachomatis serovar L2 (strain ATCC VR-902B / DSM 19102 / 434/Bu).